Consider the following 223-residue polypeptide: MSEDQGSGATRVKLVVVGDGAVGKTCLLICYAQNDFPVDYVPTVFENYTATRKRGNEDIKVHLWDTAGQEEYDRLRPLSYPGADVVLLCFSTISQSSYEAIRDKWAPEVNHYIPDVPSILVGTKIDLREQQHPDPNSGKFEPITADMGISMQKQIKAKKYLEVSAKTRQGLEEVFSAAIEIVLESRGMDKKSQDGSSSASGVPSGDKPTKGKAGKKKSGCIIL.

Residue 18-25 (GDGAVGKT) participates in GTP binding. The short motif at 40–48 (YVPTVFENY) is the Effector region element. GTP contacts are provided by residues 65–69 (DTAGQ) and 123–126 (TKID). Residues 187–223 (GMDKKSQDGSSSASGVPSGDKPTKGKAGKKKSGCIIL) form a disordered region. The segment covering 210 to 223 (KGKAGKKKSGCIIL) has biased composition (basic residues). At Cys-220 the chain carries Cysteine methyl ester. Cys-220 carries S-geranylgeranyl cysteine lipidation. The propeptide at 221–223 (IIL) is removed in mature form.

Belongs to the small GTPase superfamily. Rho family. Interacts with rgaA.

Its subcellular location is the cell membrane. Functionally, specifically required for cytokinesis. The polypeptide is Rho-related protein racE (racE) (Dictyostelium discoideum (Social amoeba)).